The chain runs to 367 residues: MNTTANTTNIIVGLSGGVDSSVTAALLKQQGYQVRGVFMQNWEDDDNDEYCSIKQDSFDAIAVADIIGIDIDIVNFAAQYKDKVFAYFLQEYSAGRTPNPDVLCNAEIKFKCFLDYAVGQGADTIATGHYARKEVRNGVHYLLKGLDRNKDQSYFLYRLKPFQLERAIFPLGGLEKPEVRRLAAEFNLPTAAKKDSTGICFIGERPFREFLQKYLPTDNGKMVTPEGKTVGEHVGLMFYTLGQRKGLGIGGAGEPWFVAAKDLTKNELIVVQGHDHPLLYTRSLVMNDLSFTLPERPKAGRYTCKTRYRMADAPCELRYLDDETAELVFDEPQWAVTPGQSAVLYDGDICLGGGIIQTTDKPVIITR.

ATP is bound by residues 13 to 20 (GLSGGVDS) and Met-39. Residues 99–101 (NPD) are interaction with target base in tRNA. Cys-104 functions as the Nucleophile in the catalytic mechanism. Cys-104 and Cys-200 are oxidised to a cystine. ATP is bound at residue Gly-128. The interval 150–152 (KDQ) is interaction with tRNA. The Cysteine persulfide intermediate role is filled by Cys-200. An interaction with tRNA region spans residues 307–308 (RY).

It belongs to the MnmA/TRMU family.

It localises to the cytoplasm. The enzyme catalyses S-sulfanyl-L-cysteinyl-[protein] + uridine(34) in tRNA + AH2 + ATP = 2-thiouridine(34) in tRNA + L-cysteinyl-[protein] + A + AMP + diphosphate + H(+). Functionally, catalyzes the 2-thiolation of uridine at the wobble position (U34) of tRNA, leading to the formation of s(2)U34. The chain is tRNA-specific 2-thiouridylase MnmA from Neisseria meningitidis serogroup C (strain 053442).